The chain runs to 181 residues: MKNNSIKTVVATGIGAALFVVIGHLINIPTFVPNTSIQLQYAVQSLLAVVFGPVVGFLVGFIGHTLKDSLTYGPWWSWILASGVFGLVVGLTKKRLRIQEGIFEGKDILFFNLVQIAANVLAWGVIAPVLDILIYSEAANKVFAQGLVAGIANSITIAIAGTLLLVVYAKSQTKTGSLSKD.

Helical transmembrane passes span 9–29, 46–66, 70–90, 108–128, and 147–167; these read VVAT…INIP, LLAV…GHTL, LTYG…LVVG, ILFF…VIAP, and LVAG…LLVV.

Belongs to the UPF0397 family.

It localises to the cell membrane. The polypeptide is UPF0397 protein SSU98_0390 (Streptococcus suis (strain 98HAH33)).